The sequence spans 237 residues: Class B acid phosphatase (237 aa).

The signal sequence occupies residues 1–23; it reads MRKTPLALSAVFLLLSLNQSAFA. Catalysis depends on Asp69, which acts as the Nucleophile. The Mg(2+) site is built by Asp69 and Asp71. The active-site Proton donor is Asp71. Substrate is bound by residues 137 to 138 and Lys177; that span reads TG. Asp192 serves as a coordination point for Mg(2+).

This sequence belongs to the class B bacterial acid phosphatase family. Homotetramer. Requires Mg(2+) as cofactor.

Its subcellular location is the periplasm. It carries out the reaction a phosphate monoester + H2O = an alcohol + phosphate. Its function is as follows. Dephosphorylates several organic phosphate monoesters. Also has a phosphotransferase activity catalyzing the transfer of low-energy phosphate groups from organic phosphate monoesters to free hydroxyl groups of various organic compounds. This chain is Class B acid phosphatase, found in Rahnella sp. (strain Y9602).